The chain runs to 655 residues: Ubiquilin-3 (655 aa).

One can recognise a Ubiquitin-like domain in the interval isoleucine 22 to methionine 98. The interval cysteine 102–tyrosine 124 is disordered. The span at glutamine 110–serine 122 shows a compositional bias: low complexity. Residues asparagine 194–methionine 233 enclose the STI1 domain. Disordered stretches follow at residues proline 277–arginine 330, alanine 364–glutamate 399, and phenylalanine 412–glycine 447. The span at alanine 279 to threonine 290 shows a compositional bias: low complexity. Over residues glycine 318–arginine 330 the composition is skewed to basic and acidic residues. The segment covering valine 377 to proline 395 has biased composition (low complexity). The segment covering lysine 432 to leucine 441 has biased composition (polar residues). The UBA domain occupies glutamine 609–serine 655.

Testis specific.

This Homo sapiens (Human) protein is Ubiquilin-3 (UBQLN3).